We begin with the raw amino-acid sequence, 336 residues long: DNA polymerase beta (336 aa).

K(+)-binding residues include lysine 59, leucine 61, and valine 64. The Na(+) site is built by lysine 59, leucine 61, and valine 64. Lysine 71 acts as the Nucleophile; Schiff-base intermediate with DNA; for 5'-dRP lyase activity in catalysis. Arginine 82 is modified (omega-N-methylarginine; by PRMT6). The K(+) site is built by threonine 100, valine 102, and isoleucine 105. Positions 100, 102, and 105 each coordinate Na(+). An a 2'-deoxyribonucleoside 5'-triphosphate-binding site is contributed by arginine 148. Arginine 151 is subject to Omega-N-methylarginine; by PRMT6. Residues serine 179, arginine 182, glycine 188, and aspartate 189 each coordinate a 2'-deoxyribonucleoside 5'-triphosphate. Residues 182–191 form a DNA-binding region; the sequence is RGAESSGDID. Mg(2+) is bound by residues aspartate 189, aspartate 191, and aspartate 257.

It belongs to the DNA polymerase type-X family. The cofactor is Mg(2+). In terms of processing, methylation by PRMT6 stimulates the polymerase activity by enhancing DNA binding and processivity. Post-translationally, ubiquitinated: monoubiquitinated by huwe1/arf-bp1. Monoubiquitinated protein is then the target of stub1/chip, which catalyzes polyubiquitination from monoubiquitin, leading to degradation by the proteasome. usp47 mediates the deubiquitination of monoubiquitinated protein, preventing polyubiquitination by STUB1/CHIP and its subsequent degradation.

The protein resides in the nucleus. Its subcellular location is the cytoplasm. It carries out the reaction DNA(n) + a 2'-deoxyribonucleoside 5'-triphosphate = DNA(n+1) + diphosphate. It catalyses the reaction a 5'-end 2'-deoxyribose-2'-deoxyribonucleotide-DNA = (2E,4S)-4-hydroxypenten-2-al-5-phosphate + a 5'-end 5'-phospho-2'-deoxyribonucleoside-DNA + H(+). The enzyme catalyses 2'-deoxyribonucleotide-(2'-deoxyribose 5'-phosphate)-2'-deoxyribonucleotide-DNA = a 3'-end 2'-deoxyribonucleotide-(2,3-dehydro-2,3-deoxyribose 5'-phosphate)-DNA + a 5'-end 5'-phospho-2'-deoxyribonucleoside-DNA + H(+). Its function is as follows. Repair polymerase that plays a key role in base-excision repair. During this process, the damaged base is excised by specific DNA glycosylases, the DNA backbone is nicked at the abasic site by an apurinic/apyrimidic (AP) endonuclease, and POLB removes 5'-deoxyribose-phosphate from the preincised AP site acting as a 5'-deoxyribose-phosphate lyase (5'-dRP lyase); through its DNA polymerase activity, it adds one nucleotide to the 3' end of the arising single-nucleotide gap. Conducts 'gap-filling' DNA synthesis in a stepwise distributive fashion rather than in a processive fashion as for other DNA polymerases. It is also able to cleave sugar-phosphate bonds 3' to an intact AP site, acting as an AP lyase. This chain is DNA polymerase beta (polb), found in Danio rerio (Zebrafish).